The sequence spans 235 residues: MRSRKSLPPLPPEQACLPWHPPGLVAGVDEAGRGPLAGPVVAAAVILDDLNPIEGLNDSKKLTAARREALYDEIRAKALCCSIAEASVEEIDRLNILQATLLAMRRAVLGLRLKPVLVLVDGNQLPVLDVQAEAIVKGDSLVQAISAASILAKVTRDRWCERLHEQYPEYGFDGHKGYGTAAHLAALRLHGACEEHRRTFAPVAHVVSIARMAEPLAAARVAAAAQGAQALLLSA.

The region spanning 23 to 212 is the RNase H type-2 domain; it reads GLVAGVDEAG…VAHVVSIARM (190 aa). The a divalent metal cation site is built by D29, E30, and D121.

This sequence belongs to the RNase HII family. Mn(2+) serves as cofactor. The cofactor is Mg(2+).

The protein resides in the cytoplasm. It catalyses the reaction Endonucleolytic cleavage to 5'-phosphomonoester.. In terms of biological role, endonuclease that specifically degrades the RNA of RNA-DNA hybrids. The chain is Ribonuclease HII from Delftia acidovorans (strain DSM 14801 / SPH-1).